The primary structure comprises 635 residues: Extracellular metalloproteinase MEP (635 aa).

An N-terminal signal peptide occupies residues 1 to 19; it reads MRAFLLASLASLPAVNVYA. Positions 20–244 are excised as a propeptide; it reads HPTHNSRGLT…VHAVVDYAAE (225 aa). 3 N-linked (GlcNAc...) asparagine glycosylation sites follow: Asn287, Asn302, and Asn336. A Zn(2+)-binding site is contributed by His429. The active site involves Glu430. Position 433 (His433) interacts with Zn(2+).

Belongs to the peptidase M36 family. Zn(2+) serves as cofactor.

It is found in the secreted. In terms of biological role, secreted metalloproteinase that allows assimilation of proteinaceous substrates. The protein is Extracellular metalloproteinase MEP (MEP) of Leptosphaeria maculans (strain JN3 / isolate v23.1.3 / race Av1-4-5-6-7-8) (Blackleg fungus).